The following is a 590-amino-acid chain: Probable lysosomal cobalamin transporter (590 aa).

10 consecutive transmembrane segments (helical) span residues 8–28, 46–66, 94–114, 145–165, 190–210, 314–334, 348–367, 376–396, 421–441, and 508–528; these read LIWV…SIFI, IFTL…VALV, AVAY…VVPF, TVAF…VPIG, ALTF…VLYT, LLSG…MLLT, CGYI…VFVH, YILF…GIAT, ITTV…SMVV, and FFGI…LLVF. Residues 567 to 590 form a disordered region; that stretch reads WEDITGRASRSPQVSGSAGRGTRE.

This sequence belongs to the LIMR family. LMBRD1 subfamily.

It is found in the lysosome membrane. Its function is as follows. Probable lysosomal cobalamin transporter. Required to export cobalamin from lysosomes allowing its conversion to cofactors. The polypeptide is Probable lysosomal cobalamin transporter (Ajellomyces capsulatus (strain NAm1 / WU24) (Darling's disease fungus)).